The chain runs to 310 residues: Vomeronasal type-1 receptor 90 (310 aa).

At 1–20 (MRRISTLYGVVDKQAIFFSE) the chain is on the extracellular side. Residues 21–41 (VVIGISFNSILFLFHIFQFLL) form a helical membrane-spanning segment. Topologically, residues 42 to 46 (ERRLR) are cytoplasmic. Residues 47 to 67 (ITDLIISLLALIHLGMLTVMG) form a helical membrane-spanning segment. Residues 68-93 (FRAVDIFASQNVWNDIKCKSLAHLHR) are Extracellular-facing. Cysteine 85 and cysteine 172 are oxidised to a cystine. Residues 94–114 (LLRGLSLCATCLLSIFQAITL) form a helical membrane-spanning segment. Residues 115–135 (SPRSSCLAKFKYKSTQHSLCS) lie on the Cytoplasmic side of the membrane. The helical transmembrane segment at 136–156 (LLVLWAFYMSCGTHYSFTIVA) threads the bilayer. At 157-183 (DYNFSSRSLIFVTESCIILPMDYITRH) the chain is on the extracellular side. Residue asparagine 159 is glycosylated (N-linked (GlcNAc...) asparagine). A helical membrane pass occupies residues 184–204 (LFFILGIFRDVSFIGLMALSS). Over 205-238 (GYMVALLCRHRKQAQHLHRTSLSPKASPEQRATR) the chain is Cytoplasmic. A helical membrane pass occupies residues 239–259 (TILLLMSFFVLMYCLDCTISA). Topologically, residues 260–271 (SRLMHNGEPIHH) are extracellular. Residues 272–292 (SIQMMVSNSYATLSPLLLIVT) traverse the membrane as a helical segment. Topologically, residues 293 to 310 (ENRISRFLKSLLGRTVDA) are cytoplasmic.

Belongs to the G-protein coupled receptor 1 family. In terms of tissue distribution, expressed in 1-4% of neurons of the vomeronasal organ. Only one pheromone receptor gene may be expressed in a particular neuron. Not expressed in the main olfactory epithelium.

The protein resides in the cell membrane. Its function is as follows. Putative pheromone receptor implicated in the regulation of social as well as reproductive behavior. This chain is Vomeronasal type-1 receptor 90 (Vom1r90), found in Rattus norvegicus (Rat).